The primary structure comprises 833 residues: DNA helicase MCM8 (833 aa).

Positions 395-602 (LLKLVVNSLC…QHDHLLSEHV (208 aa)) constitute an MCM domain. 447–454 (GDPGLGKS) lines the ATP pocket. S623 bears the Phosphoserine mark.

The protein belongs to the MCM family. As to quaternary structure, component of the MCM8-MCM9 complex, which forms a hexamer composed of MCM8 and MCM9. Interacts with the DNA mismatch repair (MMR) complex composed at least of MSH2, MSH3, MSH6, PMS1 and MLH1. Interacts with RAD51; the interaction recruits RAD51 to DNA damage sites. Interacts with the MRN complex composed of MRE11, RAD50 and NBN/NBS1. Interacts with CDC6 and ORC2. Interacts with HROB; the interaction recruits the MCM8-MCM9 complex to DNA damage sites.

The protein resides in the nucleus. It localises to the chromosome. It catalyses the reaction ATP + H2O = ADP + phosphate + H(+). In terms of biological role, component of the MCM8-MCM9 complex, a complex involved in the repair of double-stranded DNA breaks (DBSs) and DNA interstrand cross-links (ICLs) by homologous recombination (HR). Required for DNA resection by the MRE11-RAD50-NBN/NBS1 (MRN) complex by recruiting the MRN complex to the repair site and by promoting the complex nuclease activity. Probably by regulating the localization of the MNR complex, indirectly regulates the recruitment of downstream effector RAD51 to DNA damage sites including DBSs and ICLs. The MCM8-MCM9 complex is dispensable for DNA replication and S phase progression. However, may play a non-essential for DNA replication: may be involved in the activation of the prereplicative complex (pre-RC) during G(1) phase by recruiting CDC6 to the origin recognition complex (ORC). Probably by regulating HR, plays a key role during gametogenesis. Stabilizes MCM9 protein. In Mus musculus (Mouse), this protein is DNA helicase MCM8 (Mcm8).